Reading from the N-terminus, the 656-residue chain is Choline transporter-like protein 3 (656 aa).

Residues 37-57 (WLVLFFLFWTGLVFIMGYSVV) form a helical membrane-spanning segment. N-linked (GlcNAc...) asparagine glycosylation is found at Asn141 and Asn154. A run of 5 helical transmembrane segments spans residues 216–236 (DTILGLCVFTFALSLAMLFAF), 242–262 (LLIHIIISLVILGLLFVCGVL), 288–308 (LAFAIISTVVTVLLLALIFTL), 337–357 (LWTCAILIFFWVLWVAVLLSL), and 381–401 (YMWWYHLIGLIWTSEFILACQ). 2 N-linked (GlcNAc...) asparagine glycosylation sites follow: Asn506 and Asn524. The helical transmembrane segment at 537 to 557 (FVIFLGKVLVVCFSIFGGLMA) threads the bilayer. Asn559 carries N-linked (GlcNAc...) asparagine glycosylation. Residues 566 to 586 (VWAIPLLLVAFFACVVAHSFL) form a helical membrane-spanning segment. The segment at 634 to 656 (AKSQGQKDALPNEEGTELQPIVR) is disordered.

The protein belongs to the CTL (choline transporter-like) family.

It is found in the membrane. The protein is Choline transporter-like protein 3 (Slc44a3) of Mus musculus (Mouse).